The sequence spans 487 residues: Solute carrier family 22 member 15-like (487 aa).

The helical transmembrane segment at 23 to 43 (FLTLLQIYVACQSMLIVLVGA) threads the bilayer. Residue N70 is glycosylated (N-linked (GlcNAc...) asparagine). A run of 11 helical transmembrane segments spans residues 90–110 (LASS…GPLS), 117–137 (PVYL…ALAP), 141–161 (VFAV…LVSF), 178–198 (SLTN…GFYI), 203–223 (TLAF…FVLP), 286–306 (ILLM…TLNA), 315–335 (LNVA…LYFI), 345–365 (ATAG…FVPE), 374–394 (TVLA…VYIY), 408–428 (LGVC…IPAM), and 435–455 (MPFV…LLLP).

This sequence belongs to the major facilitator (TC 2.A.1) superfamily. Organic cation transporter (TC 2.A.1.19) family.

The protein resides in the membrane. Its function is as follows. Probably transports organic cations. This chain is Solute carrier family 22 member 15-like (slc22a15b), found in Xenopus laevis (African clawed frog).